The primary structure comprises 306 residues: Ornithine carbamoyltransferase (306 aa).

Residues S53–T56, Q80, R104, and H131–Q134 each bind carbamoyl phosphate. Residues N162, D219, and S223–M224 contribute to the L-ornithine site. Residues C259 to L260 and R287 each bind carbamoyl phosphate.

Belongs to the aspartate/ornithine carbamoyltransferase superfamily. OTCase family.

The protein resides in the cytoplasm. The catalysed reaction is carbamoyl phosphate + L-ornithine = L-citrulline + phosphate + H(+). Its pathway is amino-acid biosynthesis; L-arginine biosynthesis; L-arginine from L-ornithine and carbamoyl phosphate: step 1/3. Reversibly catalyzes the transfer of the carbamoyl group from carbamoyl phosphate (CP) to the N(epsilon) atom of ornithine (ORN) to produce L-citrulline. The polypeptide is Ornithine carbamoyltransferase (Psychrobacter sp. (strain PRwf-1)).